The chain runs to 277 residues: Zinc transporter ZupT (277 aa).

The next 8 membrane-spanning stretches (helical) occupy residues 7–27 (VLLAFGLTLFAGLATGVGSAI), 38–58 (FLAVALGFSAGVMIYVSFVEI), 73–93 (VLASWYTVAAFFSGALLIAVI), 133–155 (AGVLAAVAIGIHNFPEGLAAFSA), 165–187 (AIAVAIAIHNIPEGMAVSVPIYY), 196–216 (FLYSFLSGVSEPIGALVGYVV), 220–240 (FFTPMVFGLLFASVAGIMVYI), and 257–277 (LCILGVFSGMGVMALSLLLFL). N145 and E148 together coordinate Fe(2+). Residues E148 and H173 each contribute to the Zn(2+) site. Fe(2+) is bound by residues N174, E177, and E206. Position 177 (E177) interacts with Zn(2+).

Belongs to the ZIP transporter (TC 2.A.5) family. ZupT subfamily.

It localises to the cell inner membrane. It carries out the reaction Zn(2+)(in) = Zn(2+)(out). Its function is as follows. Mediates zinc uptake. May also transport other divalent cations. This chain is Zinc transporter ZupT, found in Nitratidesulfovibrio vulgaris (strain ATCC 29579 / DSM 644 / CCUG 34227 / NCIMB 8303 / VKM B-1760 / Hildenborough) (Desulfovibrio vulgaris).